The following is a 914-amino-acid chain: DNA mismatch repair protein MutS (914 aa).

The disordered stretch occupies residues 1-25 (MDKKNDHKNNLIPQPASSFASSQER). Over residues 11 to 25 (LIPQPASSFASSQER) the composition is skewed to polar residues. An ATP-binding site is contributed by 662–669 (GPNMGGKS).

Belongs to the DNA mismatch repair MutS family.

Functionally, this protein is involved in the repair of mismatches in DNA. It is possible that it carries out the mismatch recognition step. This protein has a weak ATPase activity. The protein is DNA mismatch repair protein MutS of Bartonella tribocorum (strain CIP 105476 / IBS 506).